A 102-amino-acid chain; its full sequence is Large ribosomal subunit protein mL63 (102 aa).

Belongs to the mitochondrion-specific ribosomal protein mL63 family.

The protein resides in the mitochondrion. The protein is Large ribosomal subunit protein mL63 (Mrpl57) of Mus musculus (Mouse).